The chain runs to 809 residues: Spindle pole body component alp14 (809 aa).

2 HEAT repeats span residues 127-164 (DSAA…QFGA) and 167-204 (IPSK…WTGD). Disordered regions lie at residues 233 to 274 (PPKQ…SDDQ), 507 to 608 (AKAP…SGAL), and 619 to 638 (ELDD…RYEH). A compositionally biased stretch (polar residues) spans 239-253 (FLKSQQPTSEPNVET). Residues 262 to 274 (ENEESEPEPSDDQ) show a composition bias toward acidic residues. Positions 509–518 (APTKKSKVKP) are enriched in basic residues. Low complexity-rich tracts occupy residues 526-551 (VVVP…SPRK) and 582-595 (SRGL…SLQQ). Residues serine 543 and serine 548 each carry the phosphoserine modification. A compositionally biased stretch (polar residues) spans 597–608 (VKASTPLNSGAL). The stretch at 637–697 (EHPKVLEDND…NTLRSARKAS (61 aa)) forms a coiled coil. A phosphoserine mark is found at serine 697 and serine 720.

The protein belongs to the TOG/XMAP215 family. In terms of assembly, interacts with alp14.

Its subcellular location is the cytoplasm. It localises to the cytoskeleton. The protein localises to the microtubule organizing center. It is found in the spindle pole body. The protein resides in the chromosome. Its subcellular location is the centromere. It localises to the kinetochore. Required for bipolar spindle formation and proper chromosome segregation. Has a role in connecting the kinetochores and the plus end of pole to chromosome microtubules. Also required for the activation of the spindle checkpoint pathway. The chain is Spindle pole body component alp14 (alp14) from Schizosaccharomyces pombe (strain 972 / ATCC 24843) (Fission yeast).